The primary structure comprises 176 residues: Peptide deformylase (176 aa).

Fe cation is bound by residues Cys-94 and His-136. Glu-137 is an active-site residue. Fe cation is bound at residue His-140.

Belongs to the polypeptide deformylase family. The cofactor is Fe(2+).

It carries out the reaction N-terminal N-formyl-L-methionyl-[peptide] + H2O = N-terminal L-methionyl-[peptide] + formate. Functionally, removes the formyl group from the N-terminal Met of newly synthesized proteins. Requires at least a dipeptide for an efficient rate of reaction. N-terminal L-methionine is a prerequisite for activity but the enzyme has broad specificity at other positions. This chain is Peptide deformylase, found in Mesorhizobium japonicum (strain LMG 29417 / CECT 9101 / MAFF 303099) (Mesorhizobium loti (strain MAFF 303099)).